A 195-amino-acid polypeptide reads, in one-letter code: Ribosome maturation factor RimM (195 aa).

The PRC barrel domain maps to Ala101–Leu191.

It belongs to the RimM family. In terms of assembly, binds ribosomal protein uS19.

It localises to the cytoplasm. Functionally, an accessory protein needed during the final step in the assembly of 30S ribosomal subunit, possibly for assembly of the head region. Essential for efficient processing of 16S rRNA. May be needed both before and after RbfA during the maturation of 16S rRNA. It has affinity for free ribosomal 30S subunits but not for 70S ribosomes. The sequence is that of Ribosome maturation factor RimM from Bifidobacterium adolescentis (strain ATCC 15703 / DSM 20083 / NCTC 11814 / E194a).